Reading from the N-terminus, the 152-residue chain is Nucleoside diphosphate kinase (152 aa).

ATP is bound by residues Lys11, Phe59, Arg87, Thr93, Arg104, and Asn114. The active-site Pros-phosphohistidine intermediate is the His117.

The protein belongs to the NDK family. Homotetramer. It depends on Mg(2+) as a cofactor.

It localises to the cytoplasm. The catalysed reaction is a 2'-deoxyribonucleoside 5'-diphosphate + ATP = a 2'-deoxyribonucleoside 5'-triphosphate + ADP. It carries out the reaction a ribonucleoside 5'-diphosphate + ATP = a ribonucleoside 5'-triphosphate + ADP. In terms of biological role, major role in the synthesis of nucleoside triphosphates other than ATP. The ATP gamma phosphate is transferred to the NDP beta phosphate via a ping-pong mechanism, using a phosphorylated active-site intermediate. In Prochlorococcus marinus (strain MIT 9303), this protein is Nucleoside diphosphate kinase.